Reading from the N-terminus, the 305-residue chain is uncharacterized protein (305 aa).

This sequence belongs to the ADP-ribosylglycohydrolase family.

This is an uncharacterized protein from Archaeoglobus fulgidus (strain ATCC 49558 / DSM 4304 / JCM 9628 / NBRC 100126 / VC-16).